Reading from the N-terminus, the 30-residue chain is Cyclotide mden-G (30 aa).

A cross-link (cyclopeptide (Gly-Asn)) is located at residues 1-30 (GIPCAESCVYIPCITAALGCSCKNKVCYRN). 3 cysteine pairs are disulfide-bonded: Cys4/Cys20, Cys8/Cys22, and Cys13/Cys27.

The protein belongs to the cyclotide family. Bracelet subfamily. In terms of processing, this is a cyclic peptide.

Probably participates in a plant defense mechanism. The sequence is that of Cyclotide mden-G from Melicytus dentatus (Tree violet).